The chain runs to 134 residues: MILIDTSAWVEYFRATGSIAAVEVRRLLSEEAARIAMCEPIAMEILSGALDDNTHTTLERLVNGLPSLNVDDAIDFRAAAGIYRAARRAGETVRSINDCLIAALAIRHGARIVHRDADFDVIARITNLQAASFR.

The PINc domain occupies 2 to 126 (ILIDTSAWVE…ADFDVIARIT (125 aa)). Mg(2+)-binding residues include D5 and D98.

The protein belongs to the PINc/VapC protein family. Requires Mg(2+) as cofactor.

Toxic component of a type II toxin-antitoxin (TA) system. Acts as an RNase. Its toxic effects on cell growth and colony formation are neutralized by coexpression with cognate antitoxin VapB11. The polypeptide is Ribonuclease VapC11 (Mycobacterium tuberculosis (strain CDC 1551 / Oshkosh)).